A 993-amino-acid chain; its full sequence is Serine/threonine-protein phosphatase 6 regulatory ankyrin repeat subunit B (993 aa).

28 ANK repeats span residues 7 to 36 (CEQP…DVNA), 40 to 69 (EKRT…RVNA), 73 to 102 (MWLT…DVNA), 106 to 135 (NWQT…SVNV), 139 to 168 (GGRT…NINA), 172 to 201 (KDRR…EVTC), 205 to 234 (KGYT…EIDE), 238 to 267 (YGNT…NVNQ), 271 to 301 (SGFT…DVNI), 305 to 334 (DGKS…EIDC), 338 to 367 (DGNT…DTAK), 371 to 400 (HSMF…EIDT), 404 to 433 (FGRT…DFHK), 437 to 466 (CGRT…NVNE), 470 to 498 (WGRT…DNSE), 531 to 561 (EGYN…GFEE), 566 to 595 (ALKS…DLDI), 599 to 628 (KGRT…SIFV), 633 to 662 (TKRT…NPEV), 669 to 698 (KGQT…NVDA), 702 to 731 (VGCT…SILC), 735 to 764 (RGRT…SEED), 771 to 800 (QGYT…FRKF), 803 to 832 (NPFT…PSIV), 838 to 867 (KGRT…QVNA), 871 to 901 (SGKT…DLTV), 905 to 934 (DLNT…DESL), and 941 to 970 (ALQT…CVLA). The segment at 974–993 (NASRSNGPRSPPGTAVRKEE) is disordered.

As to quaternary structure, protein phosphatase 6 (PP6) holoenzyme is proposed to be a heterotrimeric complex formed by the catalytic subunit, a SAPS domain-containing subunit (PP6R) and an ankyrin repeat-domain containing regulatory subunit (ARS). Interacts with PPP6R1.

In terms of biological role, putative regulatory subunit of protein phosphatase 6 (PP6) that may be involved in the recognition of phosphoprotein substrates. The sequence is that of Serine/threonine-protein phosphatase 6 regulatory ankyrin repeat subunit B (Ankrd44) from Mus musculus (Mouse).